A 369-amino-acid polypeptide reads, in one-letter code: 3-dehydroquinate synthase (369 aa).

NAD(+) contacts are provided by residues 110-114 (GVIGD), 134-135 (TT), Lys-147, Lys-156, and 174-177 (TLKT). Positions 189, 254, and 271 each coordinate Zn(2+).

Belongs to the sugar phosphate cyclases superfamily. Dehydroquinate synthase family. Co(2+) is required as a cofactor. It depends on Zn(2+) as a cofactor. Requires NAD(+) as cofactor.

The protein localises to the cytoplasm. The enzyme catalyses 7-phospho-2-dehydro-3-deoxy-D-arabino-heptonate = 3-dehydroquinate + phosphate. It functions in the pathway metabolic intermediate biosynthesis; chorismate biosynthesis; chorismate from D-erythrose 4-phosphate and phosphoenolpyruvate: step 2/7. Its function is as follows. Catalyzes the conversion of 3-deoxy-D-arabino-heptulosonate 7-phosphate (DAHP) to dehydroquinate (DHQ). The sequence is that of 3-dehydroquinate synthase from Cyanothece sp. (strain PCC 7425 / ATCC 29141).